Consider the following 279-residue polypeptide: Movement protein (279 aa).

Low complexity predominate over residues 256–266 (PPIAIGSPSAS). The tract at residues 256-279 (PPIAIGSPSASRNNSFRSQVVNGL) is disordered. Over residues 267 to 279 (RNNSFRSQVVNGL) the composition is skewed to polar residues.

Belongs to the cucumovirus movement protein family.

Its subcellular location is the host cell junction. It is found in the host plasmodesma. Functionally, transports viral genome to neighboring plant cells directly through plasmosdesmata, without any budding. The movement protein allows efficient cell to cell propagation, by bypassing the host cell wall barrier. Acts by forming a tubular structure at the host plasmodesmata, enlarging it enough to allow free passage of virion capsids. The sequence is that of Movement protein from Cucumis sativus (Cucumber).